A 158-amino-acid chain; its full sequence is C-type natriuretic peptide 3 (158 aa).

A signal peptide spans 1–21 (MSLNLPGYALFFILLVASSGA). Residues 22 to 136 (KPAPDLQILE…SKRSRSRYKK (115 aa)) constitute a propeptide that is removed on maturation. The segment at 32–95 (PPLSSLEEQE…EVQERGRGTG (64 aa)) is disordered. Over residues 47–64 (VQEKVQEQQEEVQEKVQE) the composition is skewed to basic and acidic residues. The span at 65-86 (QQEEVQEQQEEVQEQQEEQQEE) shows a compositional bias: acidic residues. A disulfide bridge links Cys142 with Cys158.

The protein belongs to the natriuretic peptide family.

It is found in the secreted. In terms of biological role, exhibits natriuretic and vasodepressant activity. Has cGMP-stimulating activity. May help to regulate body fluid homeostasis in a variety of aquatic environments. The sequence is that of C-type natriuretic peptide 3 from Takifugu rubripes (Japanese pufferfish).